The primary structure comprises 430 residues: Crotonyl-CoA carboxylase/reductase (430 aa).

The protein belongs to the zinc-containing alcohol dehydrogenase family. Crotonyl-CoA carboxylase/reductase subfamily. In terms of assembly, homodimer. Despite some sequence similarity to zinc-containing alcohol dehydrogenases, this enzyme does not bind any metals. is required as a cofactor.

The enzyme catalyses (2S)-ethylmalonyl-CoA + NADP(+) = (2E)-butenoyl-CoA + CO2 + NADPH. It catalyses the reaction (S)-methylmalonyl-CoA + NADP(+) = acryloyl-CoA + CO2 + NADPH. The catalysed reaction is butanoyl-CoA + NADP(+) = (2E)-butenoyl-CoA + NADPH + H(+). In terms of biological role, catalyzes the NADPH-dependent reductive carboxylation of crotonyl-CoA ((2E)-butenoyl-CoA) to (2S)-ethylmalonyl-CoA, in the presence of CO2. This is a key reaction in the ethylmalonyl-CoA pathway for acetyl-CoA assimilation required for R.sphaeroides growth on acetate as sole carbon source. Is also able to accept acryloyl-CoA as an alternative substrate, yielding (2S)-methylmalonyl-CoA. To a lesser extent, when CO2 is absent, the enzyme also catalyzes the reduction of crotonyl-CoA to butanoyl-CoA. The protein is Crotonyl-CoA carboxylase/reductase of Cereibacter sphaeroides (strain ATCC 17023 / DSM 158 / JCM 6121 / CCUG 31486 / LMG 2827 / NBRC 12203 / NCIMB 8253 / ATH 2.4.1.) (Rhodobacter sphaeroides).